The following is a 280-amino-acid chain: Energy-coupling factor transporter ATP-binding protein EcfA1 (280 aa).

The region spanning 6-244 is the ABC transporter domain; the sequence is IECKNVVYKY…VPLMKNIGLD (239 aa). Residue 43–50 coordinates ATP; it reads GHNGSGKS.

The protein belongs to the ABC transporter superfamily. Energy-coupling factor EcfA family. As to quaternary structure, forms a stable energy-coupling factor (ECF) transporter complex composed of 2 membrane-embedded substrate-binding proteins (S component), 2 ATP-binding proteins (A component) and 2 transmembrane proteins (T component).

It is found in the cell membrane. Its function is as follows. ATP-binding (A) component of a common energy-coupling factor (ECF) ABC-transporter complex. Unlike classic ABC transporters this ECF transporter provides the energy necessary to transport a number of different substrates. The protein is Energy-coupling factor transporter ATP-binding protein EcfA1 of Clostridium novyi (strain NT).